Reading from the N-terminus, the 121-residue chain is Small ribosomal subunit protein uS13 (121 aa).

A disordered region spans residues 91–121 (HRMSLPVRGQRTRTNARTRRGSRKTVAGRKK). Residues 100-121 (QRTRTNARTRRGSRKTVAGRKK) are compositionally biased toward basic residues.

Belongs to the universal ribosomal protein uS13 family. In terms of assembly, part of the 30S ribosomal subunit. Forms a loose heterodimer with protein S19. Forms two bridges to the 50S subunit in the 70S ribosome.

In terms of biological role, located at the top of the head of the 30S subunit, it contacts several helices of the 16S rRNA. In the 70S ribosome it contacts the 23S rRNA (bridge B1a) and protein L5 of the 50S subunit (bridge B1b), connecting the 2 subunits; these bridges are implicated in subunit movement. Contacts the tRNAs in the A and P-sites. This Prochlorococcus marinus (strain MIT 9211) protein is Small ribosomal subunit protein uS13.